The primary structure comprises 256 residues: Imidazole glycerol phosphate synthase subunit HisF (256 aa).

Residues Asp12 and Asp131 contribute to the active site.

The protein belongs to the HisA/HisF family. In terms of assembly, heterodimer of HisH and HisF.

It localises to the cytoplasm. It carries out the reaction 5-[(5-phospho-1-deoxy-D-ribulos-1-ylimino)methylamino]-1-(5-phospho-beta-D-ribosyl)imidazole-4-carboxamide + L-glutamine = D-erythro-1-(imidazol-4-yl)glycerol 3-phosphate + 5-amino-1-(5-phospho-beta-D-ribosyl)imidazole-4-carboxamide + L-glutamate + H(+). Its pathway is amino-acid biosynthesis; L-histidine biosynthesis; L-histidine from 5-phospho-alpha-D-ribose 1-diphosphate: step 5/9. In terms of biological role, IGPS catalyzes the conversion of PRFAR and glutamine to IGP, AICAR and glutamate. The HisF subunit catalyzes the cyclization activity that produces IGP and AICAR from PRFAR using the ammonia provided by the HisH subunit. This Micrococcus luteus (strain ATCC 4698 / DSM 20030 / JCM 1464 / CCM 169 / CCUG 5858 / IAM 1056 / NBRC 3333 / NCIMB 9278 / NCTC 2665 / VKM Ac-2230) (Micrococcus lysodeikticus) protein is Imidazole glycerol phosphate synthase subunit HisF.